Reading from the N-terminus, the 224-residue chain is Homeobox protein Hox-B6 (224 aa).

The Antp-type hexapeptide signature appears at 127 to 132 (VYPWMQ). Positions 146-205 (GRRGRQTYTRYQTLELEKEFHYNRYLTRRRRIEIAHALCLTERQIKIWFQNRRMKWKKES) form a DNA-binding region, homeobox. Ser-214 is modified (phosphoserine).

It belongs to the Antp homeobox family.

It localises to the nucleus. In terms of biological role, sequence-specific transcription factor which is part of a developmental regulatory system that provides cells with specific positional identities on the anterior-posterior axis. The chain is Homeobox protein Hox-B6 (Hoxb6) from Mus musculus (Mouse).